The chain runs to 338 residues: Phenylalanine--tRNA ligase alpha subunit (338 aa).

E253 provides a ligand contact to Mg(2+).

This sequence belongs to the class-II aminoacyl-tRNA synthetase family. Phe-tRNA synthetase alpha subunit type 1 subfamily. In terms of assembly, tetramer of two alpha and two beta subunits. Mg(2+) is required as a cofactor.

It localises to the cytoplasm. The enzyme catalyses tRNA(Phe) + L-phenylalanine + ATP = L-phenylalanyl-tRNA(Phe) + AMP + diphosphate + H(+). The protein is Phenylalanine--tRNA ligase alpha subunit of Geobacter sp. (strain M21).